The primary structure comprises 318 residues: MSCTRMIQVLDPRPLTSSVMPVDVAVRLCLAHSPPLKSFLSPYDDFQRRNFVNKLKPLKSCLNIKQEARAQDDWKPSHNQAKKRVVFADSKGLSLTAIHVFSDLPEEPVWDLQFDLLDLNDISSGLKLHEEKNLILDFPQPSADYLSFRNHFQKNSVCLENCSLQERTVTGTVKVKNMSFEKKVQIRITFDSWQSYNDVDCAYMKNVYGGSESDTFSFAIDLPSVIPTKEKIEFCVAYHANGQVFWDNNEGQNYRIVHVQWKPDGVQTQMAAQDCAFHQAPPPKAELESTVFGSPRLASGLFPEWQSWGRMENLASYR.

The PP1-binding motif signature appears at 84 to 87 (RVVF). The interaction with EPM2A stretch occupies residues 141 to 263 (PSADYLSFRN…YRIVHVQWKP (123 aa)). Residues 149–257 (RNHFQKNSVC…NNEGQNYRIV (109 aa)) form the CBM21 domain.

As to quaternary structure, interacts with PPP1CC catalytic subunit of PP1 and associates with glycogen. Forms complexes with glycogen phosphorylase, glycogen synthase and phosphorylase kinase which is necessary for its regulation of PP1 activity. Also interacts with EPM2A/laforin. In terms of processing, ubiquitinated by NHLRC1/malin in a EPM2A/laforin-dependent manner.

Acts as a glycogen-targeting subunit for PP1 and regulates its activity. Activates glycogen synthase, reduces glycogen phosphorylase activity and limits glycogen breakdown. Dramatically increases basal and insulin-stimulated glycogen synthesis upon overexpression in a variety of cell types. The polypeptide is Protein phosphatase 1 regulatory subunit 3C (Bos taurus (Bovine)).